The sequence spans 348 residues: tRNA N6-adenosine threonylcarbamoyltransferase (348 aa).

Fe cation contacts are provided by histidine 115 and histidine 119. Substrate is bound by residues 138–142 (LVSGG), aspartate 171, glycine 184, and asparagine 278. Residue aspartate 306 participates in Fe cation binding.

It belongs to the KAE1 / TsaD family. The cofactor is Fe(2+).

It localises to the cytoplasm. The enzyme catalyses L-threonylcarbamoyladenylate + adenosine(37) in tRNA = N(6)-L-threonylcarbamoyladenosine(37) in tRNA + AMP + H(+). Functionally, required for the formation of a threonylcarbamoyl group on adenosine at position 37 (t(6)A37) in tRNAs that read codons beginning with adenine. Is involved in the transfer of the threonylcarbamoyl moiety of threonylcarbamoyl-AMP (TC-AMP) to the N6 group of A37, together with TsaE and TsaB. TsaD likely plays a direct catalytic role in this reaction. The chain is tRNA N6-adenosine threonylcarbamoyltransferase from Methylibium petroleiphilum (strain ATCC BAA-1232 / LMG 22953 / PM1).